Consider the following 596-residue polypeptide: Elongation factor 4 (596 aa).

The region spanning 2-183 is the tr-type G domain; sequence ENIRNFCIIA…AIIQRIPPPK (182 aa). GTP is bound by residues 14 to 19 and 130 to 133; these read DHGKST and NKID.

It belongs to the TRAFAC class translation factor GTPase superfamily. Classic translation factor GTPase family. LepA subfamily.

It is found in the cell inner membrane. It carries out the reaction GTP + H2O = GDP + phosphate + H(+). Functionally, required for accurate and efficient protein synthesis under certain stress conditions. May act as a fidelity factor of the translation reaction, by catalyzing a one-codon backward translocation of tRNAs on improperly translocated ribosomes. Back-translocation proceeds from a post-translocation (POST) complex to a pre-translocation (PRE) complex, thus giving elongation factor G a second chance to translocate the tRNAs correctly. Binds to ribosomes in a GTP-dependent manner. The polypeptide is Elongation factor 4 (Cytophaga hutchinsonii (strain ATCC 33406 / DSM 1761 / CIP 103989 / NBRC 15051 / NCIMB 9469 / D465)).